A 234-amino-acid polypeptide reads, in one-letter code: LexA repressor (234 aa).

Basic and acidic residues predominate over residues 1-11 (MNEATSHEGPK). The tract at residues 1–34 (MNEATSHEGPKRSLPGRPPGIRADSSGLTDRQRR) is disordered. Residues 52 to 72 (MREIGQAVGLSSTSSVAHQLM) constitute a DNA-binding region (H-T-H motif). The segment covering 83 to 94 (DPHRPRAYEVRG) has biased composition (basic and acidic residues). The interval 83-109 (DPHRPRAYEVRGSDQSSSVQPTDTAGK) is disordered. Over residues 95-105 (SDQSSSVQPTD) the composition is skewed to polar residues. Active-site for autocatalytic cleavage activity residues include serine 158 and lysine 195.

The protein belongs to the peptidase S24 family. As to quaternary structure, homodimer.

It carries out the reaction Hydrolysis of Ala-|-Gly bond in repressor LexA.. Functionally, represses a number of genes involved in the response to DNA damage (SOS response), including recA and lexA. In the presence of single-stranded DNA, RecA interacts with LexA causing an autocatalytic cleavage which disrupts the DNA-binding part of LexA, leading to derepression of the SOS regulon and eventually DNA repair. The protein is LexA repressor of Streptomyces avermitilis (strain ATCC 31267 / DSM 46492 / JCM 5070 / NBRC 14893 / NCIMB 12804 / NRRL 8165 / MA-4680).